We begin with the raw amino-acid sequence, 130 residues long: MTMKIIQTAQAPAPVGPYNQAIAANGFLFTAGQIALDPQTMTIMGEGNVEVQAKQVLTNLGAVLQEAGCGWENVVKTTVFLKDMNDFAAVNAIYGQYFDEATAPARSCVEVARLPKDVLVEIDCVAVLPT.

It belongs to the RutC family.

This Synechocystis sp. (strain ATCC 27184 / PCC 6803 / Kazusa) protein is RutC family protein slr0709.